A 280-amino-acid polypeptide reads, in one-letter code: Nucleotide-binding protein Swoo_4243 (280 aa).

Gly8–Ser15 contacts ATP. Residue Asp56–Asn59 participates in GTP binding.

This sequence belongs to the RapZ-like family.

Displays ATPase and GTPase activities. This Shewanella woodyi (strain ATCC 51908 / MS32) protein is Nucleotide-binding protein Swoo_4243.